A 359-amino-acid chain; its full sequence is Opine dehydrogenase (359 aa).

The protein belongs to the lysopine/nopaline/octopine/opine/vitopine dehydrogenases family. As to quaternary structure, homodimer.

It catalyses the reaction (2S)-2-[(R)-1-carboxyethylamino]pentanoate + NAD(+) + H2O = L-2-aminopentanoate + pyruvate + NADH + H(+). In the forward direction also acts on secondary amine dicarboxylates such as N-(1-carboxyethyl)methionine and N-(1-carboxyethyl)phenylalanine. In the reverse direction, the enzyme also acts on neutral amino acids as an amino donor. They include L-amino acids such as 2-aminopentanoic acid, 2-aminobutyric acid, 2-aminohexanoic acid, 3-chloroalanine, O-acetylserine, methionine, isoleucine, valine, phenylalanine, leucine and alanine. The polypeptide is Opine dehydrogenase (odh) (Arthrobacter sp. (strain 1C)).